A 29-amino-acid polypeptide reads, in one-letter code: Cytochrome c oxidase subunit 7A2, mitochondrial (29 aa).

Residue Lys10 is modified to N6-acetyllysine.

Belongs to the cytochrome c oxidase VIIa family. In terms of assembly, component of the cytochrome c oxidase (complex IV, CIV), a multisubunit enzyme composed of 14 subunits. The complex is composed of a catalytic core of 3 subunits MT-CO1, MT-CO2 and MT-CO3, encoded in the mitochondrial DNA, and 11 supernumerary subunits COX4I, COX5A, COX5B, COX6A, COX6B, COX6C, COX7A, COX7B, COX7C, COX8 and NDUFA4, which are encoded in the nuclear genome. The complex exists as a monomer or a dimer and forms supercomplexes (SCs) in the inner mitochondrial membrane with NADH-ubiquinone oxidoreductase (complex I, CI) and ubiquinol-cytochrome c oxidoreductase (cytochrome b-c1 complex, complex III, CIII), resulting in different assemblies (supercomplex SCI(1)III(2)IV(1) and megacomplex MCI(2)III(2)IV(2)). Interacts with PET100.

The protein localises to the mitochondrion inner membrane. The protein operates within energy metabolism; oxidative phosphorylation. Functionally, component of the cytochrome c oxidase, the last enzyme in the mitochondrial electron transport chain which drives oxidative phosphorylation. The respiratory chain contains 3 multisubunit complexes succinate dehydrogenase (complex II, CII), ubiquinol-cytochrome c oxidoreductase (cytochrome b-c1 complex, complex III, CIII) and cytochrome c oxidase (complex IV, CIV), that cooperate to transfer electrons derived from NADH and succinate to molecular oxygen, creating an electrochemical gradient over the inner membrane that drives transmembrane transport and the ATP synthase. Cytochrome c oxidase is the component of the respiratory chain that catalyzes the reduction of oxygen to water. Electrons originating from reduced cytochrome c in the intermembrane space (IMS) are transferred via the dinuclear copper A center (CU(A)) of subunit 2 and heme A of subunit 1 to the active site in subunit 1, a binuclear center (BNC) formed by heme A3 and copper B (CU(B)). The BNC reduces molecular oxygen to 2 water molecules using 4 electrons from cytochrome c in the IMS and 4 protons from the mitochondrial matrix. This Canis lupus familiaris (Dog) protein is Cytochrome c oxidase subunit 7A2, mitochondrial (COX7A2).